The sequence spans 120 residues: Galanin-like peptide (120 aa).

Positions 1–22 (MALTVPLIVLAVLLSLMESPAS) are cleaved as a signal peptide. The propeptide occupies 85–120 (SLGETFAKPDSGVTFVGVPDVVPWKRIRPGTTRFQI).

This sequence belongs to the galanin family.

It is found in the secreted. Functionally, hypothalamic neuropeptide which binds to the G-protein-coupled galanin receptors (GALR1, GALR2 and GALR3). Involved in a large number of putative physiological functions in CNS homeostatic processes, including the regulation of gonadotropin-releasing hormone secretion. This chain is Galanin-like peptide (GALP), found in Sus scrofa (Pig).